The chain runs to 442 residues: tRNA modification GTPase MnmE (442 aa).

3 residues coordinate (6S)-5-formyl-5,6,7,8-tetrahydrofolate: Arg-21, Glu-79, and Lys-118. The 151-residue stretch at 215 to 365 (GLKIAIVGKP…LENKLSSYCN (151 aa)) folds into the TrmE-type G domain. Residues 225 to 230 (NVGKSS), 244 to 250 (TNEAGTT), and 269 to 272 (DTAG) contribute to the GTP site. The Mg(2+) site is built by Ser-229 and Thr-250. Residue Lys-442 participates in (6S)-5-formyl-5,6,7,8-tetrahydrofolate binding.

It belongs to the TRAFAC class TrmE-Era-EngA-EngB-Septin-like GTPase superfamily. TrmE GTPase family. In terms of assembly, homodimer. Heterotetramer of two MnmE and two MnmG subunits. The cofactor is K(+).

The protein localises to the cytoplasm. Exhibits a very high intrinsic GTPase hydrolysis rate. Involved in the addition of a carboxymethylaminomethyl (cmnm) group at the wobble position (U34) of certain tRNAs, forming tRNA-cmnm(5)s(2)U34. The polypeptide is tRNA modification GTPase MnmE (Mycoplasma mobile (strain ATCC 43663 / 163K / NCTC 11711) (Mesomycoplasma mobile)).